The chain runs to 126 residues: Holo-[acyl-carrier-protein] synthase (126 aa).

Aspartate 9 and glutamate 58 together coordinate Mg(2+).

It belongs to the P-Pant transferase superfamily. AcpS family. The cofactor is Mg(2+).

It localises to the cytoplasm. It carries out the reaction apo-[ACP] + CoA = holo-[ACP] + adenosine 3',5'-bisphosphate + H(+). Transfers the 4'-phosphopantetheine moiety from coenzyme A to a Ser of acyl-carrier-protein. The polypeptide is Holo-[acyl-carrier-protein] synthase (Shewanella frigidimarina (strain NCIMB 400)).